The sequence spans 90 residues: Small ribosomal subunit protein uS17 (90 aa).

It belongs to the universal ribosomal protein uS17 family. Part of the 30S ribosomal subunit.

Functionally, one of the primary rRNA binding proteins, it binds specifically to the 5'-end of 16S ribosomal RNA. This is Small ribosomal subunit protein uS17 from Paraburkholderia phytofirmans (strain DSM 17436 / LMG 22146 / PsJN) (Burkholderia phytofirmans).